Consider the following 141-residue polypeptide: Large ribosomal subunit protein uL14m (141 aa).

The N-terminal 19 residues, 1 to 19 (MALSLSGLILPKLMQQRAF), are a transit peptide targeting the mitochondrion.

This sequence belongs to the universal ribosomal protein uL14 family. Component of the mitochondrial ribosome large subunit (39S) which comprises a 16S rRNA and about 50 distinct proteins. Interacts with MALSU1.

Its subcellular location is the mitochondrion. Functionally, may form part of 2 intersubunit bridges in the assembled ribosome. Upon binding to MALSU1, intersubunit bridge formation is blocked, preventing ribosome formation and repressing translation. This is Large ribosomal subunit protein uL14m (mrpl14) from Danio rerio (Zebrafish).